A 499-amino-acid polypeptide reads, in one-letter code: ALBINO3-like protein 1, chloroplastic (499 aa).

Residues 1 to 45 constitute a chloroplast transit peptide; it reads MSSTISLKPTHLILSSFSTGKVLQFRRSRFSHTPSSSSSRYRTLV. 4 helical membrane-spanning segments follow: residues 115–135, 184–204, 263–283, and 302–322; these read LSTVHVPYSYGFAIILLTVLV, LAGINPLAGCLPTLATIPVWI, LAYLVLPLLLVFSQYLSIQIM, and LLPLMIGYFALSVPSGLSLYW. The tract at residues 378-499 is disordered; it reads LKIPREKGGE…QQHSHETEKR (122 aa). Composition is skewed to basic and acidic residues over residues 379–420, 430–452, and 486–499; these read KIPR…RQKA, DKAHEQDEKSDTAIVAEDDKKTE, and HDTEQQHSHETEKR. The stretch at 397–436 forms a coiled coil; the sequence is GERFRLLKEQEAKRRREKEERQKAEAALSNQNTDKAHEQD.

This sequence belongs to the OXA1/ALB3/YidC (TC 2.A.9.2) family. In terms of assembly, homodimer. Interacts with ALB3. Interacts with STIC2. As to expression, highly expressed in green tissues.

The protein resides in the plastid. The protein localises to the chloroplast thylakoid membrane. Its function is as follows. Required for the insertion of some light harvesting chlorophyll-binding proteins (LHCP) into the chloroplast thylakoid membrane. Plays a role in the accumulation of some cytochrome b6f components in the thylakoid membrane. Required for the assembly and/or stability of the F(1)F(0) ATP synthase in chloroplast thylakoid membranes. Functions to stabilize or promote assembly of F(1) during its attachment to the membrane-embedded F(0) part. Participates with STIC2 in thylakoid protein targeting. May function with a specific subset of thylakoidal proteins. The chain is ALBINO3-like protein 1, chloroplastic from Arabidopsis thaliana (Mouse-ear cress).